Consider the following 434-residue polypeptide: Glutamyl-tRNA reductase 2 (434 aa).

Residues 57-60, S113, 118-120, and Q124 contribute to the substrate site; these read TCNR and DFE. The Nucleophile role is filled by C58. Residue 193 to 198 participates in NADP(+) binding; sequence GTGKIG.

It belongs to the glutamyl-tRNA reductase family. Homodimer.

It catalyses the reaction (S)-4-amino-5-oxopentanoate + tRNA(Glu) + NADP(+) = L-glutamyl-tRNA(Glu) + NADPH + H(+). It participates in porphyrin-containing compound metabolism; protoporphyrin-IX biosynthesis; 5-aminolevulinate from L-glutamyl-tRNA(Glu): step 1/2. Functionally, catalyzes the NADPH-dependent reduction of glutamyl-tRNA(Glu) to glutamate 1-semialdehyde (GSA). In Flavobacterium johnsoniae (strain ATCC 17061 / DSM 2064 / JCM 8514 / BCRC 14874 / CCUG 350202 / NBRC 14942 / NCIMB 11054 / UW101) (Cytophaga johnsonae), this protein is Glutamyl-tRNA reductase 2.